A 124-amino-acid polypeptide reads, in one-letter code: Small ribosomal subunit protein bS6 (124 aa).

Residues 96–124 (ETGPSPMMKEVQREEAKKAAAAQPTEAQA) are disordered. Residues 114-124 (AAAAQPTEAQA) are compositionally biased toward low complexity.

It belongs to the bacterial ribosomal protein bS6 family.

In terms of biological role, binds together with bS18 to 16S ribosomal RNA. In Burkholderia vietnamiensis (strain G4 / LMG 22486) (Burkholderia cepacia (strain R1808)), this protein is Small ribosomal subunit protein bS6.